A 1372-amino-acid polypeptide reads, in one-letter code: DNA-directed RNA polymerase subunit beta' (1372 aa).

4 residues coordinate Zn(2+): cysteine 69, cysteine 71, cysteine 84, and cysteine 87. 3 residues coordinate Mg(2+): aspartate 460, aspartate 462, and aspartate 464. Positions 808, 882, 889, and 892 each coordinate Zn(2+).

It belongs to the RNA polymerase beta' chain family. In terms of assembly, the RNAP catalytic core consists of 2 alpha, 1 beta, 1 beta' and 1 omega subunit. When a sigma factor is associated with the core the holoenzyme is formed, which can initiate transcription. Requires Mg(2+) as cofactor. The cofactor is Zn(2+).

It catalyses the reaction RNA(n) + a ribonucleoside 5'-triphosphate = RNA(n+1) + diphosphate. Functionally, DNA-dependent RNA polymerase catalyzes the transcription of DNA into RNA using the four ribonucleoside triphosphates as substrates. This Rickettsia prowazekii (strain Madrid E) protein is DNA-directed RNA polymerase subunit beta'.